The sequence spans 677 residues: Beta-galactosidase (677 aa).

Positions 1–23 (MPGFLVRILPLLLALLLLGPTRG) are cleaved as a signal peptide. The propeptide occupies 24 to 28 (LRNAT). Residue asparagine 26 is glycosylated (N-linked (GlcNAc...) asparagine). Positions 83, 129, and 187 each coordinate substrate. Glutamate 188 acts as the Proton donor in catalysis. The cysteines at positions 195 and 230 are disulfide-linked. Asparagine 247 carries N-linked (GlcNAc...) asparagine glycosylation. Glutamate 268 functions as the Nucleophile in the catalytic mechanism. Tyrosine 333 contributes to the substrate binding site. Asparagine 464, asparagine 498, asparagine 545, and asparagine 555 each carry an N-linked (GlcNAc...) asparagine glycan. Cysteine 626 and cysteine 634 are disulfide-bonded. The tract at residues 654-677 (SKPVEKKLMPSPPQKNKDSWLDHV) is disordered. Positions 668 to 677 (KNKDSWLDHV) are enriched in basic and acidic residues.

Belongs to the glycosyl hydrolase 35 family. As to quaternary structure, homodimer. May form higher multimers.

Its subcellular location is the lysosome. It catalyses the reaction Hydrolysis of terminal non-reducing beta-D-galactose residues in beta-D-galactosides.. Cleaves beta-linked terminal galactosyl residues from gangliosides, glycoproteins, and glycosaminoglycans. This chain is Beta-galactosidase (GLB1), found in Pongo abelii (Sumatran orangutan).